A 306-amino-acid chain; its full sequence is uncharacterized protein (306 aa).

The disordered stretch occupies residues 287 to 306; the sequence is DEEGKSEDAKRQEEEKKKSS.

The protein belongs to the aldo/keto reductase family.

It localises to the cytoplasm. Its subcellular location is the nucleus. This is an uncharacterized protein from Schizosaccharomyces pombe (strain 972 / ATCC 24843) (Fission yeast).